The sequence spans 146 residues: Hemoglobin subunit beta-1 (146 aa).

The 145-residue stretch at 2–146 folds into the Globin domain; that stretch reads EWTDKERAII…VVSALGKQYH (145 aa). Heme b contacts are provided by His63 and His92.

Belongs to the globin family. Hb 1 is a heterotetramer of two alpha-1 and two beta-1 chains. Red blood cells.

In terms of biological role, involved in oxygen transport from gills to the various peripheral tissues. In Gobionotothen gibberifrons (Humped rockcod), this protein is Hemoglobin subunit beta-1 (hbb1).